Consider the following 513-residue polypeptide: ATP synthase subunit alpha (513 aa).

169–176 (GDRQTGKT) contacts ATP.

It belongs to the ATPase alpha/beta chains family. F-type ATPases have 2 components, CF(1) - the catalytic core - and CF(0) - the membrane proton channel. CF(1) has five subunits: alpha(3), beta(3), gamma(1), delta(1), epsilon(1). CF(0) has three main subunits: a(1), b(2) and c(9-12). The alpha and beta chains form an alternating ring which encloses part of the gamma chain. CF(1) is attached to CF(0) by a central stalk formed by the gamma and epsilon chains, while a peripheral stalk is formed by the delta and b chains.

The protein localises to the cell inner membrane. The enzyme catalyses ATP + H2O + 4 H(+)(in) = ADP + phosphate + 5 H(+)(out). Its function is as follows. Produces ATP from ADP in the presence of a proton gradient across the membrane. The alpha chain is a regulatory subunit. This Bordetella bronchiseptica (strain ATCC BAA-588 / NCTC 13252 / RB50) (Alcaligenes bronchisepticus) protein is ATP synthase subunit alpha.